A 51-amino-acid polypeptide reads, in one-letter code: Bacteriocin aureocin A53 (51 aa).

Position 1 is an N-formylmethionine (methionine 1).

It localises to the secreted. Functionally, antibacterial peptide active against a broad range of lactic acid bacteria, L.monocytogenes and many epidemiologically unrelated strains of S.aureus involved in bovine mastitis. This Staphylococcus aureus protein is Bacteriocin aureocin A53 (aucA).